We begin with the raw amino-acid sequence, 248 residues long: MSSSSLTTTSSMDSVVDGGLDTRLSLAVGCCPPRRRPVLLFGEVLPSPEKKVAAAAVVAAGKRGREQRGEAEAEATTTRQRRSCKKGRRGRGDDDDDDGDRRSPSGGGGDEEGASRKKLRLTGEQATLLEDSFRAHNILSHAEKQELAGKLGLSARQVEVWFQNRRARTKLKQTEADCDLLRRWCDHLAADNARLRRDLAELRRSSSSPPVSGLAVATPVVCPSCAHDDKRRLAFATAAAAAGDMASN.

The tract at residues 50 to 118 (KKVAAAAVVA…GDEEGASRKK (69 aa)) is disordered. Basic residues predominate over residues 79–89 (RQRRSCKKGRR). Positions 114–173 (ASRKKLRLTGEQATLLEDSFRAHNILSHAEKQELAGKLGLSARQVEVWFQNRRARTKLKQ) form a DNA-binding region, homeobox. A leucine-zipper region spans residues 172-216 (KQTEADCDLLRRWCDHLAADNARLRRDLAELRRSSSSPPVSGLAV).

It belongs to the HD-ZIP homeobox family. Class II subfamily.

The protein resides in the nucleus. Its function is as follows. Probable transcription factor. This is Putative homeobox-leucine zipper protein HOX26 (HOX26) from Oryza sativa subsp. japonica (Rice).